Reading from the N-terminus, the 375-residue chain is Chaperone protein DnaJ (375 aa).

Positions Asp4–Gly68 constitute a J domain. The segment at Gly134–Thr216 adopts a CR-type zinc-finger fold. The Zn(2+) site is built by Cys147, Cys150, Cys164, Cys167, Cys190, Cys193, Cys204, and Cys207. CXXCXGXG motif repeat units follow at residues Cys147–Gly154, Cys164–Gly171, Cys190–Gly197, and Cys204–Gly211.

Belongs to the DnaJ family. In terms of assembly, homodimer. Zn(2+) is required as a cofactor.

The protein localises to the cytoplasm. In terms of biological role, participates actively in the response to hyperosmotic and heat shock by preventing the aggregation of stress-denatured proteins and by disaggregating proteins, also in an autonomous, DnaK-independent fashion. Unfolded proteins bind initially to DnaJ; upon interaction with the DnaJ-bound protein, DnaK hydrolyzes its bound ATP, resulting in the formation of a stable complex. GrpE releases ADP from DnaK; ATP binding to DnaK triggers the release of the substrate protein, thus completing the reaction cycle. Several rounds of ATP-dependent interactions between DnaJ, DnaK and GrpE are required for fully efficient folding. Also involved, together with DnaK and GrpE, in the DNA replication of plasmids through activation of initiation proteins. The protein is Chaperone protein DnaJ of Gloeothece citriformis (strain PCC 7424) (Cyanothece sp. (strain PCC 7424)).